Here is a 492-residue protein sequence, read N- to C-terminus: MDAEIISVMPFDNSYARLDKKFYQRINPTPVKHPRIILVNRELAGEMEFPLPETDAELAELFSGNKPPQGSEPLAQVYAGHQFGNFVPQLGDGRAVLLGEFVSSSGKRYDIQLKGAGQTMYSRNGDGRSPLGPVIREYIVSEAMFRLGIPTTRALAMVCSGEEVFREQALPGAVFTRVASSHIRIGTFEYFASRNDYEGVKTLADYAIDRHYPHLKEAGNPYAAFLGKVCSVQARLIAKWMRIGFIHGVMNTDNTTISGETIDYGPCAFMDGYDPATVFSSIDHYGRYAYARQPSIAQWNLAGLAGCLLPLIHKDTGQAKSRAEEIVQGFGPEFRTHYFAEMCSKIGLKPEEPVQELLNDLLQIMHESKADFTLSFRMLGKAVLGNETPLLKLFNERDKIREWLEKWDEERERQNIKKEDAVRTMDRNNPAFIPRNHRVEQAISAAVENDDFEPTKKLIKILHHPYDDQPEYDEYMQPPEPTERVYQTFCGT.

The ATP site is built by Gly91, Gly93, Arg94, Lys114, Asp126, Gly127, Arg177, and Arg184. Asp253 serves as the catalytic Proton acceptor. The Mg(2+) site is built by Asn254 and Asp263. Asp263 provides a ligand contact to ATP.

The protein belongs to the SELO family. Mg(2+) is required as a cofactor. Mn(2+) serves as cofactor.

The catalysed reaction is L-seryl-[protein] + ATP = 3-O-(5'-adenylyl)-L-seryl-[protein] + diphosphate. It catalyses the reaction L-threonyl-[protein] + ATP = 3-O-(5'-adenylyl)-L-threonyl-[protein] + diphosphate. It carries out the reaction L-tyrosyl-[protein] + ATP = O-(5'-adenylyl)-L-tyrosyl-[protein] + diphosphate. The enzyme catalyses L-histidyl-[protein] + UTP = N(tele)-(5'-uridylyl)-L-histidyl-[protein] + diphosphate. The catalysed reaction is L-seryl-[protein] + UTP = O-(5'-uridylyl)-L-seryl-[protein] + diphosphate. It catalyses the reaction L-tyrosyl-[protein] + UTP = O-(5'-uridylyl)-L-tyrosyl-[protein] + diphosphate. In terms of biological role, nucleotidyltransferase involved in the post-translational modification of proteins. It can catalyze the addition of adenosine monophosphate (AMP) or uridine monophosphate (UMP) to a protein, resulting in modifications known as AMPylation and UMPylation. This chain is Protein nucleotidyltransferase YdiU, found in Maridesulfovibrio salexigens (strain ATCC 14822 / DSM 2638 / NCIMB 8403 / VKM B-1763) (Desulfovibrio salexigens).